A 430-amino-acid polypeptide reads, in one-letter code: Serine hydroxymethyltransferase (430 aa).

120–122 contacts (6S)-5,6,7,8-tetrahydrofolate; the sequence is GHI. K226 bears the N6-(pyridoxal phosphate)lysine mark.

Belongs to the SHMT family. In terms of assembly, homodimer. Requires pyridoxal 5'-phosphate as cofactor.

The protein localises to the cytoplasm. It functions in the pathway amino-acid biosynthesis; glycine biosynthesis; glycine from L-serine: step 1/1. Functionally, catalyzes the reversible interconversion of serine and glycine with a modified folate serving as the one-carbon carrier. Also exhibits a pteridine-independent aldolase activity toward beta-hydroxyamino acids, producing glycine and aldehydes, via a retro-aldol mechanism. The chain is Serine hydroxymethyltransferase from Pyrobaculum calidifontis (strain DSM 21063 / JCM 11548 / VA1).